Reading from the N-terminus, the 346-residue chain is MSEAARLIAPEKRGEDVDATLRPQTLDEFTGQAEARANLKIFIEAARNRGEALDHVLFVGPPGLGKTTLAQIMAKELGVNFRSTSGPVIAKAGDLAALLTNLEERDVLFIDEIHRLNPAVEEILYPAMEDFQLDLIIGEGPSARSVKIDLAKFTLVAATTRLGLLTTPLRDRFGIPVRLNFYTVEELELIVRRGARLMGLGMTDEGAREIARRARGTPRIAGRLLRRVRDFAEVARAEAVTRQIADEALTRLLVDSMGLDQLDRRYLTMIAQNFGGGPVGIETIAAGLSEPRDAIEDIIEPYLIQQGFIQRTPRGRVLTANAWKHLGLNPPKDVEASQFRLTLEDD.

A large ATPase domain (RuvB-L) region spans residues 1–182; that stretch reads MSEAARLIAP…FGIPVRLNFY (182 aa). ATP is bound by residues Leu-21, Arg-22, Gly-63, Lys-66, Thr-67, Thr-68, 129–131, Arg-172, Tyr-182, and Arg-219; that span reads EDF. Position 67 (Thr-67) interacts with Mg(2+). Residues 183–253 form a small ATPAse domain (RuvB-S) region; it reads TVEELELIVR…IADEALTRLL (71 aa). Residues 256-346 form a head domain (RuvB-H) region; the sequence is SMGLDQLDRR…SQFRLTLEDD (91 aa). Residues Arg-292, Arg-311, and Arg-316 each coordinate DNA.

It belongs to the RuvB family. As to quaternary structure, homohexamer. Forms an RuvA(8)-RuvB(12)-Holliday junction (HJ) complex. HJ DNA is sandwiched between 2 RuvA tetramers; dsDNA enters through RuvA and exits via RuvB. An RuvB hexamer assembles on each DNA strand where it exits the tetramer. Each RuvB hexamer is contacted by two RuvA subunits (via domain III) on 2 adjacent RuvB subunits; this complex drives branch migration. In the full resolvosome a probable DNA-RuvA(4)-RuvB(12)-RuvC(2) complex forms which resolves the HJ.

The protein localises to the cytoplasm. It carries out the reaction ATP + H2O = ADP + phosphate + H(+). The RuvA-RuvB-RuvC complex processes Holliday junction (HJ) DNA during genetic recombination and DNA repair, while the RuvA-RuvB complex plays an important role in the rescue of blocked DNA replication forks via replication fork reversal (RFR). RuvA specifically binds to HJ cruciform DNA, conferring on it an open structure. The RuvB hexamer acts as an ATP-dependent pump, pulling dsDNA into and through the RuvAB complex. RuvB forms 2 homohexamers on either side of HJ DNA bound by 1 or 2 RuvA tetramers; 4 subunits per hexamer contact DNA at a time. Coordinated motions by a converter formed by DNA-disengaged RuvB subunits stimulates ATP hydrolysis and nucleotide exchange. Immobilization of the converter enables RuvB to convert the ATP-contained energy into a lever motion, pulling 2 nucleotides of DNA out of the RuvA tetramer per ATP hydrolyzed, thus driving DNA branch migration. The RuvB motors rotate together with the DNA substrate, which together with the progressing nucleotide cycle form the mechanistic basis for DNA recombination by continuous HJ branch migration. Branch migration allows RuvC to scan DNA until it finds its consensus sequence, where it cleaves and resolves cruciform DNA. The protein is Holliday junction branch migration complex subunit RuvB of Sinorhizobium medicae (strain WSM419) (Ensifer medicae).